We begin with the raw amino-acid sequence, 218 residues long: Octanoyltransferase (218 aa).

The 187-residue stretch at 32–218 (GEAAEAIWLL…LRTFPQHFPD (187 aa)) folds into the BPL/LPL catalytic domain. Residues 71–78 (RGGQYTYH), 151–153 (AIG), and 164–166 (GLS) each bind substrate. Residue C182 is the Acyl-thioester intermediate of the active site.

The protein belongs to the LipB family.

It is found in the cytoplasm. The enzyme catalyses octanoyl-[ACP] + L-lysyl-[protein] = N(6)-octanoyl-L-lysyl-[protein] + holo-[ACP] + H(+). It participates in protein modification; protein lipoylation via endogenous pathway; protein N(6)-(lipoyl)lysine from octanoyl-[acyl-carrier-protein]: step 1/2. Functionally, catalyzes the transfer of endogenously produced octanoic acid from octanoyl-acyl-carrier-protein onto the lipoyl domains of lipoate-dependent enzymes. Lipoyl-ACP can also act as a substrate although octanoyl-ACP is likely to be the physiological substrate. This is Octanoyltransferase from Cereibacter sphaeroides (strain ATCC 17023 / DSM 158 / JCM 6121 / CCUG 31486 / LMG 2827 / NBRC 12203 / NCIMB 8253 / ATH 2.4.1.) (Rhodobacter sphaeroides).